The following is a 545-amino-acid chain: Capsular polysaccharide phosphotransferase SacB (545 aa).

This sequence belongs to the stealth family.

Functionally, may be the polymerase that links individual UDP-N-acetyl-D-mannosamine monomers. In serotype A the capsule is composed of repeated units of (alpha 1-6)-linked N-acetyl-D-mannosamine-1-phosphate. The chain is Capsular polysaccharide phosphotransferase SacB (sacB) from Neisseria meningitidis serogroup A.